The primary structure comprises 855 residues: Spindle and centriole-associated protein 1 (855 aa).

Residues 164-200 are disordered; that stretch reads QALNDVDGEEEGTVTSQSGESENENELDNSLNSQSNT. Thr-235 is modified (phosphothreonine). Over residues 300–311 the composition is skewed to basic residues; the sequence is KPNLHALSKPKK. The disordered stretch occupies residues 300–328; sequence KPNLHALSKPKKNMLSGSTTSADLPNRTN. Polar residues predominate over residues 314 to 328; that stretch reads LSGSTTSADLPNRTN. Residues 325-437 adopt a coiled-coil conformation; sequence NRTNSNLDVL…TQARLRQYMV (113 aa). Residues Ser-640 and Ser-644 each carry the phosphoserine modification. Residues 725 to 751 adopt a coiled-coil conformation; that stretch reads GSMEERIAELNRQSMEARGKLLQLIEQ. Residues Ser-760, Ser-764, and Ser-819 each carry the phosphoserine modification. The tract at residues 789 to 834 is disordered; that stretch reads EAPESSKCSTVSPVSEINTRRSSGATSNSCSPLNATSGSGRFTPLN. Positions 794-828 are enriched in polar residues; it reads SKCSTVSPVSEINTRRSSGATSNSCSPLNATSGSG.

In terms of assembly, interacts with CEP120.

Its subcellular location is the cytoplasm. The protein resides in the cytoskeleton. The protein localises to the microtubule organizing center. It is found in the centrosome. It localises to the centriole. Its subcellular location is the spindle. Functionally, regulator required for centriole duplication, for proper bipolar spindle formation and chromosome congression in mitosis. This chain is Spindle and centriole-associated protein 1 (SPICE1), found in Pongo abelii (Sumatran orangutan).